Reading from the N-terminus, the 346-residue chain is MANAYKQAGVDIEAGYEAVSRMKKHVQTTMRKEVLGGLGGFGGMFDLSKFALEEPVLVSGTDGVGTKLMLAFMADKHDTIGIDAVAMCVNDIVVQGAEPLFFLDYIACGKAEPSKIENIVKGISEGCRQAGCALIGGETAEMPGMYSTEEYDLAGFTVGIVDKKKIVTGENIEAGHVLIGLASSGIHSNGYSLVRKVLLEDGELSLDRIYGRLELPLGEELLKPTKIYVKPILELLKKYEVYGMAHITGGGFIENIPRMLPEEIGAEIELGSWEIQPIFSLLQEVGKLEEKEMFNIFNMGIGMVVAVKEEDAKDVVRLLEEQGETARIIGRTVQGAGVTFNGGTAL.

The protein belongs to the AIR synthase family.

The protein resides in the cytoplasm. It catalyses the reaction 2-formamido-N(1)-(5-O-phospho-beta-D-ribosyl)acetamidine + ATP = 5-amino-1-(5-phospho-beta-D-ribosyl)imidazole + ADP + phosphate + H(+). It functions in the pathway purine metabolism; IMP biosynthesis via de novo pathway; 5-amino-1-(5-phospho-D-ribosyl)imidazole from N(2)-formyl-N(1)-(5-phospho-D-ribosyl)glycinamide: step 2/2. The chain is Phosphoribosylformylglycinamidine cyclo-ligase from Bacillus cereus (strain AH187).